The sequence spans 864 residues: Leucine--tRNA ligase (864 aa).

The short motif at 42 to 52 is the 'HIGH' region element; sequence PYPSGKLHMGH. The 'KMSKS' region signature appears at 624-628; it reads KMSKS. Residue lysine 627 coordinates ATP.

The protein belongs to the class-I aminoacyl-tRNA synthetase family.

The protein resides in the cytoplasm. The catalysed reaction is tRNA(Leu) + L-leucine + ATP = L-leucyl-tRNA(Leu) + AMP + diphosphate. This is Leucine--tRNA ligase from Burkholderia mallei (strain NCTC 10229).